The chain runs to 298 residues: UDP-3-O-acyl-N-acetylglucosamine deacetylase (298 aa).

Zn(2+)-binding residues include His-80, His-239, and Asp-243. His-266 serves as the catalytic Proton donor.

Belongs to the LpxC family. It depends on Zn(2+) as a cofactor.

It carries out the reaction a UDP-3-O-[(3R)-3-hydroxyacyl]-N-acetyl-alpha-D-glucosamine + H2O = a UDP-3-O-[(3R)-3-hydroxyacyl]-alpha-D-glucosamine + acetate. The protein operates within glycolipid biosynthesis; lipid IV(A) biosynthesis; lipid IV(A) from (3R)-3-hydroxytetradecanoyl-[acyl-carrier-protein] and UDP-N-acetyl-alpha-D-glucosamine: step 2/6. In terms of biological role, catalyzes the hydrolysis of UDP-3-O-myristoyl-N-acetylglucosamine to form UDP-3-O-myristoylglucosamine and acetate, the committed step in lipid A biosynthesis. In Blochmanniella floridana, this protein is UDP-3-O-acyl-N-acetylglucosamine deacetylase.